We begin with the raw amino-acid sequence, 217 residues long: 3-demethoxyubiquinol 3-hydroxylase (217 aa).

Residues Glu66, Glu96, His99, Glu148, Glu180, and His183 each contribute to the Fe cation site.

This sequence belongs to the COQ7 family. Requires Fe cation as cofactor.

It is found in the cell membrane. It catalyses the reaction a 5-methoxy-2-methyl-3-(all-trans-polyprenyl)benzene-1,4-diol + AH2 + O2 = a 3-demethylubiquinol + A + H2O. It participates in cofactor biosynthesis; ubiquinone biosynthesis. In terms of biological role, catalyzes the hydroxylation of 2-nonaprenyl-3-methyl-6-methoxy-1,4-benzoquinol during ubiquinone biosynthesis. This is 3-demethoxyubiquinol 3-hydroxylase from Ralstonia pickettii (strain 12J).